Here is a 399-residue protein sequence, read N- to C-terminus: Acetate kinase (399 aa).

Asparagine 7 lines the Mg(2+) pocket. Lysine 14 is an ATP binding site. Residue arginine 91 participates in substrate binding. The active-site Proton donor/acceptor is the aspartate 148. Residues 208–212 (HIGNG), 283–285 (DMR), and 331–335 (GVGEN) each bind ATP. Glutamate 385 is a binding site for Mg(2+).

It belongs to the acetokinase family. As to quaternary structure, homodimer. It depends on Mg(2+) as a cofactor. Mn(2+) serves as cofactor.

It localises to the cytoplasm. The enzyme catalyses acetate + ATP = acetyl phosphate + ADP. The protein operates within metabolic intermediate biosynthesis; acetyl-CoA biosynthesis; acetyl-CoA from acetate: step 1/2. Its function is as follows. Catalyzes the formation of acetyl phosphate from acetate and ATP. Can also catalyze the reverse reaction. This Bacteroides thetaiotaomicron (strain ATCC 29148 / DSM 2079 / JCM 5827 / CCUG 10774 / NCTC 10582 / VPI-5482 / E50) protein is Acetate kinase.